The primary structure comprises 403 residues: Argininosuccinate synthase (403 aa).

ATP contacts are provided by residues 10–18 (AYSGGLDTS) and alanine 37. Residues tyrosine 88 and serine 93 each coordinate L-citrulline. Glycine 118 contacts ATP. The L-aspartate site is built by threonine 120, asparagine 124, and aspartate 125. Asparagine 124 contacts L-citrulline. 5 residues coordinate L-citrulline: arginine 128, serine 178, serine 187, glutamate 263, and tyrosine 275.

This sequence belongs to the argininosuccinate synthase family. Type 1 subfamily. As to quaternary structure, homotetramer.

Its subcellular location is the cytoplasm. It catalyses the reaction L-citrulline + L-aspartate + ATP = 2-(N(omega)-L-arginino)succinate + AMP + diphosphate + H(+). It functions in the pathway amino-acid biosynthesis; L-arginine biosynthesis; L-arginine from L-ornithine and carbamoyl phosphate: step 2/3. In Marinobacter nauticus (strain ATCC 700491 / DSM 11845 / VT8) (Marinobacter aquaeolei), this protein is Argininosuccinate synthase.